The sequence spans 257 residues: UPF0246 protein Sama_0917 (257 aa).

The protein belongs to the UPF0246 family.

This chain is UPF0246 protein Sama_0917, found in Shewanella amazonensis (strain ATCC BAA-1098 / SB2B).